The chain runs to 274 residues: MGMKFFNPVTPSSRGTILISKIGLSKDKPEKSLVFGKKSSGGRNNHGRITTRHRGGGHKKKYRVIDFKRNRSDQGIVEKIEYDPNRSGFLALISYKEDDTKSYILAPQGMKPGDVVTAGDDADILPGNCLLLKHIPVGSFVHNVELKPGNGAAIARAAGCYAQIVGRDGQYVLLRLRSGQIRLILSSCKATIGVVSNLDHKNRKLGKAGRSRWLGIRPAVRGVAMNPVDHPHGGGEGKTSGGRHPVTPWGVATKGKKTRKKNKSSDKYIKKLKG.

2 disordered regions span residues 35–55 (FGKKSSGGRNNHGRITTRHRG) and 224–274 (AMNP…KLKG). Residues 45–55 (NHGRITTRHRG) are compositionally biased toward basic residues. Over residues 263–274 (KSSDKYIKKLKG) the composition is skewed to basic and acidic residues.

The protein belongs to the universal ribosomal protein uL2 family. As to quaternary structure, part of the 50S ribosomal subunit. Forms a bridge to the 30S subunit in the 70S ribosome.

One of the primary rRNA binding proteins. Required for association of the 30S and 50S subunits to form the 70S ribosome, for tRNA binding and peptide bond formation. It has been suggested to have peptidyltransferase activity; this is somewhat controversial. Makes several contacts with the 16S rRNA in the 70S ribosome. This Wolbachia pipientis subsp. Culex pipiens (strain wPip) protein is Large ribosomal subunit protein uL2.